The primary structure comprises 817 residues: Leucine--tRNA ligase (817 aa).

A 'HIGH' region motif is present at residues 51 to 61 (PYPSGDLHVGH). A 'KMSKS' region motif is present at residues 588–592 (RMSKS). Residue lysine 591 coordinates ATP.

This sequence belongs to the class-I aminoacyl-tRNA synthetase family.

Its subcellular location is the cytoplasm. The enzyme catalyses tRNA(Leu) + L-leucine + ATP = L-leucyl-tRNA(Leu) + AMP + diphosphate. The protein is Leucine--tRNA ligase of Rubrobacter xylanophilus (strain DSM 9941 / JCM 11954 / NBRC 16129 / PRD-1).